The primary structure comprises 255 residues: NAD-dependent protein deacylase (255 aa).

The 253-residue stretch at 1-253 (MEFSDELLAS…PLLLQALRRS (253 aa)) folds into the Deacetylase sirtuin-type domain. 22–42 (GAGVSAESGIPTFRDALTGFW) contacts NAD(+). Residues Tyr-67 and Arg-70 each contribute to the substrate site. 101-104 (QNVD) lines the NAD(+) pocket. His-119 functions as the Proton acceptor in the catalytic mechanism. Zn(2+) is bound by residues Cys-127, Cys-130, Cys-155, and Cys-158. NAD(+)-binding positions include 195 to 197 (GTS), 221 to 223 (NPA), and Ala-239.

This sequence belongs to the sirtuin family. Class III subfamily. It depends on Zn(2+) as a cofactor.

The protein localises to the cytoplasm. It carries out the reaction N(6)-acetyl-L-lysyl-[protein] + NAD(+) + H2O = 2''-O-acetyl-ADP-D-ribose + nicotinamide + L-lysyl-[protein]. It catalyses the reaction N(6)-succinyl-L-lysyl-[protein] + NAD(+) + H2O = 2''-O-succinyl-ADP-D-ribose + nicotinamide + L-lysyl-[protein]. NAD-dependent lysine deacetylase and desuccinylase that specifically removes acetyl and succinyl groups on target proteins. Modulates the activities of several proteins which are inactive in their acylated form. The polypeptide is NAD-dependent protein deacylase (Methylococcus capsulatus (strain ATCC 33009 / NCIMB 11132 / Bath)).